A 373-amino-acid polypeptide reads, in one-letter code: Stationary phase protein 5 (373 aa).

Its function is as follows. Required for survival at high temperature during stationary phase. The sequence is that of Stationary phase protein 5 (SPG5) from Saccharomyces cerevisiae (strain ATCC 204508 / S288c) (Baker's yeast).